The sequence spans 292 residues: Tetratricopeptide repeat protein 1 (292 aa).

Positions 20-125 (TDPQEAECLH…SSRLKEEGNE (106 aa)) are disordered. 2 stretches are compositionally biased toward basic and acidic residues: residues 36-49 (KEQHSQSELLKDVD) and 75-85 (GADKLENKPED). The span at 86 to 98 (DMNPSELDEEYLM) shows a compositional bias: acidic residues. Residue Ser90 is modified to Phosphoserine. The segment covering 99–125 (ELEKNMPDEEKKRRREESSRLKEEGNE) has biased composition (basic and acidic residues). TPR repeat units lie at residues 116-149 (SSRLKEEGNEQFKKGDYIEAESSYTRALQTCPSC), 155-188 (SVLFSNRAAARMKQEKKEMAISDCSKAIQLNPSY), and 189-222 (IRAILRRAELYEKTDKLDEALEDYKSILEKDPSV).

In terms of assembly, interacts with the GAP domain of NF1. Interacts (via TPR repeats) with HSP90AA1 and HSPA8.

In Bos taurus (Bovine), this protein is Tetratricopeptide repeat protein 1 (TTC1).